A 385-amino-acid chain; its full sequence is 1-deoxy-D-xylulose 5-phosphate reductoisomerase 1 (385 aa).

NADPH is bound by residues Thr-11, Gly-12, Ser-13, Ile-14, Asn-39, and Asn-122. Residue Lys-123 participates in 1-deoxy-D-xylulose 5-phosphate binding. Glu-124 lines the NADPH pocket. Asp-148 is a Mn(2+) binding site. 4 residues coordinate 1-deoxy-D-xylulose 5-phosphate: Ser-149, Glu-150, Ser-174, and His-197. Glu-150 is a binding site for Mn(2+). Gly-203 is a binding site for NADPH. 1-deoxy-D-xylulose 5-phosphate contacts are provided by Ser-210, Asn-215, Lys-216, and Glu-219. A Mn(2+)-binding site is contributed by Glu-219.

The protein belongs to the DXR family. The cofactor is Mg(2+). Requires Mn(2+) as cofactor.

It carries out the reaction 2-C-methyl-D-erythritol 4-phosphate + NADP(+) = 1-deoxy-D-xylulose 5-phosphate + NADPH + H(+). It participates in isoprenoid biosynthesis; isopentenyl diphosphate biosynthesis via DXP pathway; isopentenyl diphosphate from 1-deoxy-D-xylulose 5-phosphate: step 1/6. Functionally, catalyzes the NADPH-dependent rearrangement and reduction of 1-deoxy-D-xylulose-5-phosphate (DXP) to 2-C-methyl-D-erythritol 4-phosphate (MEP). This Bacillus cereus (strain ATCC 14579 / DSM 31 / CCUG 7414 / JCM 2152 / NBRC 15305 / NCIMB 9373 / NCTC 2599 / NRRL B-3711) protein is 1-deoxy-D-xylulose 5-phosphate reductoisomerase 1.